The primary structure comprises 87 residues: uncharacterized protein (87 aa).

This is an uncharacterized protein from Enterobacteria phage T4 (Bacteriophage T4).